A 354-amino-acid polypeptide reads, in one-letter code: Uroporphyrinogen decarboxylase (354 aa).

Residues 28–32, Asp78, Tyr155, Ser210, and His325 contribute to the substrate site; that span reads RQAGR.

Belongs to the uroporphyrinogen decarboxylase family. As to quaternary structure, homodimer.

It is found in the cytoplasm. It catalyses the reaction uroporphyrinogen III + 4 H(+) = coproporphyrinogen III + 4 CO2. It participates in porphyrin-containing compound metabolism; protoporphyrin-IX biosynthesis; coproporphyrinogen-III from 5-aminolevulinate: step 4/4. Catalyzes the decarboxylation of four acetate groups of uroporphyrinogen-III to yield coproporphyrinogen-III. The polypeptide is Uroporphyrinogen decarboxylase (Trichodesmium erythraeum (strain IMS101)).